A 682-amino-acid chain; its full sequence is Methionine synthase reductase (682 aa).

The Flavodoxin-like domain occupies 4 to 147 (FLIAFGSQTG…EVEPWIEKFF (144 aa)). 93–124 (LLGLGDSNYSSYQTIPRKIDKQLTALGANRLF) provides a ligand contact to FMN. One can recognise an FAD-binding FR-type domain in the interval 271 to 516 (TKPFEVLVVS…GKEPARFRLP (246 aa)). Position 293 (Lys-293) interacts with NADP(+). FAD contacts are provided by residues 455-458 (RPYS) and 488-491 (GLAT). NADP(+) contacts are provided by residues 607 to 609 (RVQ) and Asp-643. Trp-681 is an FAD binding site.

It depends on FAD as a cofactor. FMN serves as cofactor.

It catalyses the reaction 2 methylcob(III)alamin-[methionine synthase] + 2 S-adenosyl-L-homocysteine + NADP(+) + H(+) = 2 cob(II)alamin-[methionine synthase] + 2 S-adenosyl-L-methionine + NADPH. Functionally, involved in the reductive regeneration of cob(I)alamin cofactor required for the maintenance of methionine synthase in a functional state. The protein is Methionine synthase reductase of Caenorhabditis elegans.